The chain runs to 261 residues: Nickel import ATP-binding protein NikD (261 aa).

The region spanning 6–248 (LRIEGLTIAT…PRHDATRALV (243 aa)) is the ABC transporter domain. 41–48 (GASGSGKS) is an ATP binding site.

Belongs to the ABC transporter superfamily. Nickel importer (TC 3.A.1.5.3) family. As to quaternary structure, the complex is composed of two ATP-binding proteins (NikD and NikE), two transmembrane proteins (NikB and NikC) and a solute-binding protein (NikA).

It localises to the cell inner membrane. The catalysed reaction is Ni(2+)(out) + ATP + H2O = Ni(2+)(in) + ADP + phosphate + H(+). Its function is as follows. Part of the ABC transporter complex NikABCDE involved in nickel import. Responsible for energy coupling to the transport system. This chain is Nickel import ATP-binding protein NikD, found in Rhodospirillum rubrum (strain ATCC 11170 / ATH 1.1.1 / DSM 467 / LMG 4362 / NCIMB 8255 / S1).